An 89-amino-acid polypeptide reads, in one-letter code: Elongation factor 1-beta (89 aa).

The protein belongs to the EF-1-beta/EF-1-delta family.

Functionally, promotes the exchange of GDP for GTP in EF-1-alpha/GDP, thus allowing the regeneration of EF-1-alpha/GTP that could then be used to form the ternary complex EF-1-alpha/GTP/AAtRNA. In Methanocella arvoryzae (strain DSM 22066 / NBRC 105507 / MRE50), this protein is Elongation factor 1-beta.